The following is a 296-amino-acid chain: Cytidine deaminase (296 aa).

CMP/dCMP-type deaminase domains follow at residues glutamate 47–serine 167 and aspartate 186–glutamate 296. Asparagine 88–glutamate 90 provides a ligand contact to substrate. Position 101 (histidine 101) interacts with Zn(2+). Glutamate 103 functions as the Proton donor in the catalytic mechanism. The Zn(2+) site is built by cysteine 128 and cysteine 131.

Belongs to the cytidine and deoxycytidylate deaminase family. In terms of assembly, homodimer. The cofactor is Zn(2+).

It carries out the reaction cytidine + H2O + H(+) = uridine + NH4(+). The enzyme catalyses 2'-deoxycytidine + H2O + H(+) = 2'-deoxyuridine + NH4(+). This enzyme scavenges exogenous and endogenous cytidine and 2'-deoxycytidine for UMP synthesis. The chain is Cytidine deaminase from Shewanella pealeana (strain ATCC 700345 / ANG-SQ1).